A 287-amino-acid chain; its full sequence is NH(3)-dependent NAD(+) synthetase (287 aa).

53–60 (GISGGQDS) serves as a coordination point for ATP. Aspartate 59 provides a ligand contact to Mg(2+). Arginine 146 is a deamido-NAD(+) binding site. Position 166 (threonine 166) interacts with ATP. Position 171 (glutamate 171) interacts with Mg(2+). Residues lysine 179 and aspartate 186 each contribute to the deamido-NAD(+) site. 2 residues coordinate ATP: lysine 195 and threonine 217. 266–267 (HK) contributes to the deamido-NAD(+) binding site.

This sequence belongs to the NAD synthetase family. Homodimer.

The enzyme catalyses deamido-NAD(+) + NH4(+) + ATP = AMP + diphosphate + NAD(+) + H(+). Its pathway is cofactor biosynthesis; NAD(+) biosynthesis; NAD(+) from deamido-NAD(+) (ammonia route): step 1/1. Its function is as follows. Catalyzes the ATP-dependent amidation of deamido-NAD to form NAD. Uses ammonia as a nitrogen source. This is NH(3)-dependent NAD(+) synthetase from Deinococcus radiodurans (strain ATCC 13939 / DSM 20539 / JCM 16871 / CCUG 27074 / LMG 4051 / NBRC 15346 / NCIMB 9279 / VKM B-1422 / R1).